The following is a 431-amino-acid chain: Galactose-3-O-sulfotransferase 3 (431 aa).

Residues 1-19 (MPPILQRLQQATKMMSRRK) are Cytoplasmic-facing. A helical; Signal-anchor for type II membrane protein transmembrane segment spans residues 20–40 (ILLLVLGCSTVSLLIHQGAQL). The Lumenal segment spans residues 41-431 (SWYPKLFPLS…RVLPRGPQGP (391 aa)). 4 N-linked (GlcNAc...) asparagine glycosylation sites follow: N91, N110, N177, and N302. A disordered region spans residues 399–431 (QKRRGGARARPEPVLDNPPPRPIRVLPRGPQGP).

This sequence belongs to the galactose-3-O-sulfotransferase family. Requires Mg(2+) as cofactor. Highly expressed in thyroid, brain, kidney, heart and spinal cord.

The protein resides in the golgi apparatus. It localises to the golgi stack membrane. It functions in the pathway protein modification; carbohydrate sulfation. In terms of biological role, transfers a sulfate to position 3 of non-reducing beta-galactosyl residues in N-glycans and core2-branched O-glycans. Has high activity towards Gal-beta-1,4-GlcNAc, Gal-beta-1,4(Fuc-alpha-1,3)GlcNAc and lower activity towards Gal-beta-1,3(Fuc-alpha-1,4)GlcNAc. This Homo sapiens (Human) protein is Galactose-3-O-sulfotransferase 3 (GAL3ST3).